A 282-amino-acid chain; its full sequence is Acetylglutamate kinase (282 aa).

Residues 62–63 (GG), arginine 84, and asparagine 178 each bind substrate.

This sequence belongs to the acetylglutamate kinase family. ArgB subfamily.

The protein resides in the cytoplasm. It carries out the reaction N-acetyl-L-glutamate + ATP = N-acetyl-L-glutamyl 5-phosphate + ADP. It functions in the pathway amino-acid biosynthesis; L-arginine biosynthesis; N(2)-acetyl-L-ornithine from L-glutamate: step 2/4. Catalyzes the ATP-dependent phosphorylation of N-acetyl-L-glutamate. This is Acetylglutamate kinase from Thermotoga petrophila (strain ATCC BAA-488 / DSM 13995 / JCM 10881 / RKU-1).